The sequence spans 967 residues: MPFTKSCRSANTLRKGIKNGKLILKIIVNDIDNVESCLSGDESNDSKKSSASFYMKLKYGSYRALADNILSTDENRKEDIAVFDVPLPNGLQIDTFTLCLYRKSKWKKQIVGEAYIGIQALLLSTNPDETCKYPVISPPSGRNKENQSPSHQICNLSLKWIIYDPEDADADSKTLAKAWLQQIKMNQTSIDPMSNISKSLKELEVDNVESDLEDSSFIAEPDSSIPPSESSVSISTDTGKETPPSKSKKSSNQPYVSIGEGNSDLLGFVFLEIISVSNLPPLKNVFRTGFDMDPFVITAFSKNIFRTKWLRHNLNPVYNEKFLFEVGAFESNYDLVFKVVDHDKMSLNDSIAVGSFNVQSIINSSAQVDPETGLYSFNIETSSPSQDTSSKAEDSPTVQKIADDFSSAVGKDLRTDIIEQIIPLTLCCKHDFSTPRDVKLSFKAMFFPIAALRQKFWRVMLAQYGDIEDGHIGKLGMYAVLDTLGSNIPNSMVDDIYTELSSKNHDDTSDSITVDEAVICLERLVDLVCHQDQQATQTPQSPSSNEESGPGTPTQTSDQYEDSEDSRNFPSKLYLVYLSNCPLCLKFKLSKVNQQKATVHLATCASHDWKRVDRLMMTSYVSLNQAQRRWFSKAFAKVVYGSSKVGSTSATTLVQNRQTGQIQEEKMNAYVRIGIRLLYRGIRNRRIEGSKVKKILRSLTLKQGMKYDSPISVKEIKPFIRFFDLNMNEVDMPVGGFKTFNEFFYRKLKPGSRPCAFPDNPDILVSPADSRIVAYECIEKATTYWIKGTEFTVERLLGYSNEAQRFVGGSICISRLAPQDYHRFHSPVNGCIGPITKIEGQYYTVNPMAIRSYLDVFGENVRVLIPIDSNEFGKVMLVAVGAMMVGSTVLTVDEGKIVQRSDELGYFKFGGSTVITLFEPNVTSFDEDLLRNSKTKIETLVKMGERIGQKIDPNKPTDAEDHSKSDS.

Positions 217–255 (FIAEPDSSIPPSESSVSISTDTGKETPPSKSKKSSNQPY) are disordered. Positions 220–237 (EPDSSIPPSESSVSISTD) are enriched in low complexity. The C2 domain maps to 250–373 (SSNQPYVSIG…SSAQVDPETG (124 aa)). Positions 343, 346, and 349 each coordinate Ca(2+). The span at 532–544 (DQQATQTPQSPSS) shows a compositional bias: low complexity. The disordered stretch occupies residues 532–566 (DQQATQTPQSPSSNEESGPGTPTQTSDQYEDSEDS). Residues 545–558 (NEESGPGTPTQTSD) show a composition bias toward polar residues. Active-site charge relay system; for autoendoproteolytic cleavage activity residues include D769, H825, and S912. Residue S912 is the Schiff-base intermediate with substrate; via pyruvic acid; for decarboxylase activity of the active site. Residue S912 is modified to Pyruvic acid (Ser); by autocatalysis. A disordered region spans residues 947 to 967 (IGQKIDPNKPTDAEDHSKSDS).

Belongs to the phosphatidylserine decarboxylase family. PSD-B subfamily. Eukaryotic type II sub-subfamily. In terms of assembly, heterodimer of a large membrane-associated beta subunit and a small pyruvoyl-containing alpha subunit. Pyruvate serves as cofactor. Ca(2+) is required as a cofactor. In terms of processing, is synthesized initially as an inactive proenzyme. Formation of the active enzyme involves a self-maturation process in which the active site pyruvoyl group is generated from an internal serine residue via an autocatalytic post-translational modification. Two non-identical subunits are generated from the proenzyme in this reaction, and the pyruvate is formed at the N-terminus of the alpha chain, which is derived from the carboxyl end of the proenzyme. The autoendoproteolytic cleavage occurs by a canonical serine protease mechanism, in which the side chain hydroxyl group of the serine supplies its oxygen atom to form the C-terminus of the beta chain, while the remainder of the serine residue undergoes an oxidative deamination to produce ammonia and the pyruvoyl prosthetic group on the alpha chain. During this reaction, the Ser that is part of the protease active site of the proenzyme becomes the pyruvoyl prosthetic group, which constitutes an essential element of the active site of the mature decarboxylase.

Its subcellular location is the golgi apparatus membrane. It is found in the endosome membrane. The protein localises to the cytoplasm. The catalysed reaction is a 1,2-diacyl-sn-glycero-3-phospho-L-serine + H(+) = a 1,2-diacyl-sn-glycero-3-phosphoethanolamine + CO2. It participates in phospholipid metabolism; phosphatidylethanolamine biosynthesis; phosphatidylethanolamine from CDP-diacylglycerol: step 2/2. In terms of biological role, catalyzes the formation of phosphatidylethanolamine (PtdEtn) from phosphatidylserine (PtdSer). Plays a central role in phospholipid metabolism and in the interorganelle trafficking of phosphatidylserine. Together with psd1 and psd2, responsible for the majority of phosphatidylethanolamine synthesis. In Schizosaccharomyces pombe (strain 972 / ATCC 24843) (Fission yeast), this protein is Phosphatidylserine decarboxylase proenzyme 3.